Consider the following 315-residue polypeptide: Ribosomal protein L11 methyltransferase (315 aa).

Positions 152, 185, 207, and 249 each coordinate S-adenosyl-L-methionine.

This sequence belongs to the methyltransferase superfamily. PrmA family.

The protein resides in the cytoplasm. The enzyme catalyses L-lysyl-[protein] + 3 S-adenosyl-L-methionine = N(6),N(6),N(6)-trimethyl-L-lysyl-[protein] + 3 S-adenosyl-L-homocysteine + 3 H(+). Functionally, methylates ribosomal protein L11. The sequence is that of Ribosomal protein L11 methyltransferase from Geotalea uraniireducens (strain Rf4) (Geobacter uraniireducens).